A 68-amino-acid polypeptide reads, in one-letter code: Tabimmunregulin 12 (68 aa).

The first 24 residues, 1 to 24 (MLFKSYVYFLAGLLLVGLFTSCDA), serve as a signal peptide directing secretion. Residues 25-38 (DAQYEELVPGFFRK) constitute a propeptide that is removed on maturation.

In terms of tissue distribution, expressed in salivary glands.

Its subcellular location is the secreted. Horsefly salivary gland immunosuppressant protein that likely inhibits the host inflammatory response by regulation of anti- and pro-inflammatory cytokines. When tested on mouse splenocytes in the presence of LPS, it increases the secretion of the proinflammatory cytokine interleukin-10 (IL10) and decreases the secretion of the proinflammatory cytokine interferon-gamma (IFNG) in a dose-dependent manner. The chain is Tabimmunregulin 12 from Tabanus yao (Horsefly).